The chain runs to 301 residues: Sulfate adenylyltransferase subunit 2 (301 aa).

Positions 279-301 (RQGRMIDHDSSGSMEEKKKQGYF) are disordered.

It belongs to the PAPS reductase family. CysD subfamily. In terms of assembly, heterodimer composed of CysD, the smaller subunit, and CysN.

The catalysed reaction is sulfate + ATP + H(+) = adenosine 5'-phosphosulfate + diphosphate. The protein operates within sulfur metabolism; hydrogen sulfide biosynthesis; sulfite from sulfate: step 1/3. Functionally, with CysN forms the ATP sulfurylase (ATPS) that catalyzes the adenylation of sulfate producing adenosine 5'-phosphosulfate (APS) and diphosphate, the first enzymatic step in sulfur assimilation pathway. APS synthesis involves the formation of a high-energy phosphoric-sulfuric acid anhydride bond driven by GTP hydrolysis by CysN coupled to ATP hydrolysis by CysD. The protein is Sulfate adenylyltransferase subunit 2 of Marinomonas sp. (strain MWYL1).